A 567-amino-acid chain; its full sequence is Arginine--tRNA ligase (567 aa).

A 'HIGH' region motif is present at residues 121–131 (ANPNGPLHVGH).

Belongs to the class-I aminoacyl-tRNA synthetase family.

The protein resides in the cytoplasm. It carries out the reaction tRNA(Arg) + L-arginine + ATP = L-arginyl-tRNA(Arg) + AMP + diphosphate. The sequence is that of Arginine--tRNA ligase from Methanococcoides burtonii (strain DSM 6242 / NBRC 107633 / OCM 468 / ACE-M).